The primary structure comprises 433 residues: 3-phosphoshikimate 1-carboxyvinyltransferase (433 aa).

Residues lysine 22, serine 23, and arginine 27 each contribute to the 3-phosphoshikimate site. Lysine 22 serves as a coordination point for phosphoenolpyruvate. Glycine 95 and arginine 123 together coordinate phosphoenolpyruvate. Positions 167, 169, 315, and 342 each coordinate 3-phosphoshikimate. A phosphoenolpyruvate-binding site is contributed by glutamine 169. The active-site Proton acceptor is the aspartate 315. Phosphoenolpyruvate contacts are provided by arginine 346 and arginine 387.

This sequence belongs to the EPSP synthase family. Monomer.

It is found in the cytoplasm. It catalyses the reaction 3-phosphoshikimate + phosphoenolpyruvate = 5-O-(1-carboxyvinyl)-3-phosphoshikimate + phosphate. It functions in the pathway metabolic intermediate biosynthesis; chorismate biosynthesis; chorismate from D-erythrose 4-phosphate and phosphoenolpyruvate: step 6/7. Its function is as follows. Catalyzes the transfer of the enolpyruvyl moiety of phosphoenolpyruvate (PEP) to the 5-hydroxyl of shikimate-3-phosphate (S3P) to produce enolpyruvyl shikimate-3-phosphate and inorganic phosphate. This Legionella pneumophila (strain Lens) protein is 3-phosphoshikimate 1-carboxyvinyltransferase.